Here is a 613-residue protein sequence, read N- to C-terminus: Azole resistance protein 1 (613 aa).

Residues 1–38 (MKGEPKTYSMSDLSYYGEKAQQQNEKQQKQYVVRRNST) are disordered. Residues 1-70 (MKGEPKTYSM…PKGFILYASL (70 aa)) lie on the Extracellular side of the membrane. Residues 71–91 (IALALSLFLAALDIMIVSTII) form a helical membrane-spanning segment. At 92-102 (EEVAKQFGSYS) the chain is on the cytoplasmic side. Residues 103-123 (EIGWLFTGYSLPNALLALIWG) form a helical membrane-spanning segment. Topologically, residues 124 to 134 (RIATPIGFKET) are extracellular. A helical transmembrane segment spans residues 135 to 155 (MLFAIVIFEIGSLISALANSM). The Cytoplasmic portion of the chain corresponds to 156-163 (SMLIGGRV). A helical transmembrane segment spans residues 164–184 (IAGVGGCGIQSLSFVIGSTLV). Residues 185-189 (EESQR) lie on the Extracellular side of the membrane. Residues 190–210 (GILIAVLSCSFAIASVVGPFL) form a helical membrane-spanning segment. Over 211 to 221 (GGVFTSSVTWR) the chain is Cytoplasmic. A helical transmembrane segment spans residues 222–242 (WCFYVNLPIGGLAFFLFLFFY). Over 243–298 (NPGLSTFQETMDNIRKFPSQFIEIVRNVAYHLLKIKGFSKLNGWRKPFMELIFMYD) the chain is Extracellular. A helical membrane pass occupies residues 299-319 (IIEFVFCSAGFTCILLAFTFG). The Cytoplasmic segment spans residues 320–329 (GNRYAWNSAS). A helical membrane pass occupies residues 330-350 (IIILFIIGIVLVVLAGIYDFL). At 351–375 (VFPKFNIVKATPHYQPLMSWTNIKK) the chain is on the extracellular side. The helical transmembrane segment at 376 to 396 (PGIFTVNIALFLTCAGYISQF) threads the bilayer. Topologically, residues 397 to 414 (TYIVQYFQLIYNDSAWRA) are cytoplasmic. A helical transmembrane segment spans residues 415–435 (AVHLVACIISTVVTAILCGAI). Over 436-443 (TDKTRQIK) the chain is Extracellular. The chain crosses the membrane as a helical span at residues 444 to 464 (PIIVISSIFGVVGAGILTLLN). The Cytoplasmic portion of the chain corresponds to 465–472 (NNANNSAH). The helical transmembrane segment at 473 to 493 (IGLLILPGVAFGGLAQSSMLA) threads the bilayer. At 494–581 (SQIQLDKKSP…SKLGNIISES (88 aa)) the chain is on the extracellular side. A helical membrane pass occupies residues 582-602 (LTDVFYMALGFYALSLIFAVF). Residues 603-613 (ASNKKVTASLR) are Cytoplasmic-facing.

Belongs to the major facilitator superfamily.

The protein localises to the cell membrane. Functionally, transporter protein required for adaptation to high stress imposed by low-chain organic acids, in particular by acetic acid, and for resistance to azoles, especially to ketoconazole and fluconazole. The protein is Azole resistance protein 1 (AZR1) of Saccharomyces cerevisiae (strain ATCC 204508 / S288c) (Baker's yeast).